A 343-amino-acid chain; its full sequence is SUMO-activating enzyme subunit aos-1 (343 aa).

It belongs to the ubiquitin-activating E1 family. In terms of assembly, heterodimer of aos-1 and uba-2.

The protein operates within protein modification; protein sumoylation. Its function is as follows. The dimeric enzyme acts as an E1 ligase for smo-1. It mediates ATP-dependent activation of smo-1 and formation of a thioester with a conserved cysteine residue on uba-2. The sequence is that of SUMO-activating enzyme subunit aos-1 (aos-1) from Caenorhabditis elegans.